We begin with the raw amino-acid sequence, 196 residues long: Imidazoleglycerol-phosphate dehydratase (196 aa).

This sequence belongs to the imidazoleglycerol-phosphate dehydratase family.

It localises to the cytoplasm. The catalysed reaction is D-erythro-1-(imidazol-4-yl)glycerol 3-phosphate = 3-(imidazol-4-yl)-2-oxopropyl phosphate + H2O. The protein operates within amino-acid biosynthesis; L-histidine biosynthesis; L-histidine from 5-phospho-alpha-D-ribose 1-diphosphate: step 6/9. This is Imidazoleglycerol-phosphate dehydratase from Caulobacter vibrioides (strain ATCC 19089 / CIP 103742 / CB 15) (Caulobacter crescentus).